The chain runs to 301 residues: Mitochondrial import receptor subunit TOM40 homolog (301 aa).

Positions 1 to 19 are enriched in polar residues; the sequence is MATPTESELASPIPQTNPG. The interval 1–20 is disordered; it reads MATPTESELASPIPQTNPGS.

It belongs to the Tom40 family. In terms of assembly, forms part of the preprotein translocase complex of the outer mitochondrial membrane (TOM complex). Interacts with mitochondrial targeting sequences. In terms of tissue distribution, ubiquitously expressed, but highly expressed in the pharyngeal muscles, the nerve ring, the intestine, gonadal sheath and in the tail hypodermis.

It is found in the mitochondrion outer membrane. Functionally, channel-forming protein essential for import of protein precursors into mitochondria. Specifically required for nnt-1 accumulation in the mitochondria and may be involved in the secretion of daf-28/insulin from the mitochondria. Required for embryonic and larval development. This chain is Mitochondrial import receptor subunit TOM40 homolog, found in Caenorhabditis elegans.